The chain runs to 871 residues: uncharacterized protein (871 aa).

11 helical membrane-spanning segments follow: residues 11-31 (AFVS…GLFL), 92-112 (YLFT…PILL), 139-159 (FYAH…IIYR), 380-400 (TILT…GCIS), 422-442 (LLGI…MSLV), 475-495 (VQVF…VQVI), 520-540 (FLLQ…TLLL), 562-582 (LSAP…TIMI), 586-606 (IIAP…YFAY), 629-649 (LFQV…LFVL), and 653-673 (WGAT…HLYF). A phosphoserine mark is found at serine 725, serine 726, serine 727, serine 729, serine 737, and serine 761. Residues 727 to 740 (SGSDEFLETSSRTS) show a composition bias toward polar residues. The tract at residues 727–746 (SGSDEFLETSSRTSENTKEK) is disordered.

It belongs to the CSC1 (TC 1.A.17) family.

It is found in the golgi apparatus membrane. Acts as an osmosensitive calcium-permeable cation channel. This is an uncharacterized protein from Schizosaccharomyces pombe (strain 972 / ATCC 24843) (Fission yeast).